A 263-amino-acid polypeptide reads, in one-letter code: Hydroxyethylthiazole kinase (263 aa).

Methionine 41 contributes to the substrate binding site. Residues lysine 117 and serine 163 each contribute to the ATP site. Glycine 190 serves as a coordination point for substrate.

Belongs to the Thz kinase family. Requires Mg(2+) as cofactor.

It catalyses the reaction 5-(2-hydroxyethyl)-4-methylthiazole + ATP = 4-methyl-5-(2-phosphooxyethyl)-thiazole + ADP + H(+). It functions in the pathway cofactor biosynthesis; thiamine diphosphate biosynthesis; 4-methyl-5-(2-phosphoethyl)-thiazole from 5-(2-hydroxyethyl)-4-methylthiazole: step 1/1. In terms of biological role, catalyzes the phosphorylation of the hydroxyl group of 4-methyl-5-beta-hydroxyethylthiazole (THZ). This is Hydroxyethylthiazole kinase from Thermoanaerobacter sp. (strain X514).